A 182-amino-acid chain; its full sequence is MRRSAARGRAVSSTQTAMGAGAAIAVWAAALIALYSSCAAQTAPKTSSLRAANASDTIGRLIDGAEQLVSMRCMTSFEHEAAVTLYGPEYTPGGSMFEDLLTIIFKPQCSPPEAILWYKSGTAVRVNPYYLCRILVLALQGNPRGEVKFVVSRLIAEHAGGPLVRWPTTNVLRPEKTAPGGV.

The first 39 residues, 1-39, serve as a signal peptide directing secretion; sequence MRRSAARGRAVSSTQTAMGAGAAIAVWAAALIALYSSCA. The 131-residue stretch at 52 to 182 folds into the gL alphaherpesvirus-type domain; that stretch reads ANASDTIGRL…RPEKTAPGGV (131 aa). A disulfide bridge connects residues C73 and C109.

This sequence belongs to the herpesviridae glycoprotein L (gL) family. Alphaherpesvirinae gL subfamily. As to quaternary structure, interacts with glycoprotein H (gH); this interaction is necessary for the correct processing and cell surface expression of gH. The heterodimer gH/gL seems to interact with gB trimers during fusion. O-glycosylated, and sialylated.

The protein resides in the virion membrane. It is found in the host cell membrane. It localises to the host Golgi apparatus. Its subcellular location is the host trans-Golgi network. Its function is as follows. The heterodimer glycoprotein H-glycoprotein L is required for the fusion of viral and plasma membranes leading to virus entry into the host cell. Acts as a functional inhibitor of gH and maintains gH in an inhibited form. Upon binding to host integrins, gL dissociates from gH leading to activation of the viral fusion glycoproteins gB and gH. This chain is Envelope glycoprotein L, found in Amazona oratrix (yellow-headed parrot).